A 549-amino-acid chain; its full sequence is Polycomb group RING finger protein 3 homolog mig-32 (549 aa).

Residues 1-263 (MTRKRPALAE…EESMRQKYGQ (263 aa)) form a disordered region. Over residues 12–29 (VSSSRSRVTRRSTTGAPS) the composition is skewed to low complexity. Acidic residues-rich tracts occupy residues 38 to 49 (PESDADSEDDYD) and 87 to 100 (MDDD…DGEV). Over residues 118–130 (KTAKLQTKKKKKK) the composition is skewed to basic residues. A compositionally biased stretch (pro residues) spans 134–144 (PETPPTSPSPS). Residues 145-156 (PSRSVSPSTTKS) show a composition bias toward low complexity. Residues 205–235 (EEIKLRERAERKARRIEEAKNRPKLTIEQKL) are compositionally biased toward basic and acidic residues. The stretch at 206–260 (EIKLRERAERKARRIEEAKNRPKLTIEQKLAKLRKKKERRERRKEQEKEESMRQK) forms a coiled coil. Over residues 236 to 247 (AKLRKKKERRER) the composition is skewed to basic residues. Positions 248-258 (RKEQEKEESMR) are enriched in basic and acidic residues. Residues 329–368 (CGICDGYIVDATTIIDCMHTFCKSCLLTYFESDNNTCPTC) form an RING-type zinc finger.

As to quaternary structure, component of a PRC1-like complex.

The protein localises to the nucleus. The protein resides in the nucleolus. Its function is as follows. Component of a Polycomb group (PcG) multiprotein PRC1-like complex, a complex class required to maintain the transcriptionally repressive state of many genes, throughout development. Required for ubiquitination of histone H2A. Plays a role in the formation of the male-specific genital sensilla (simple sense organs) known as rays. Required for normal migration of the hermaphrodite specific neurons (HSN) and for extension of some neuronal processes. Represses vulval fates in hypodermal cells that do not normally contribute to vulval development. The chain is Polycomb group RING finger protein 3 homolog mig-32 from Caenorhabditis elegans.